The primary structure comprises 938 residues: RIPOR family member 3 (938 aa).

Residues Ser-9, Ser-24, and Ser-340 each carry the phosphoserine modification. Thr-345 is modified (phosphothreonine). Ser-351 and Ser-384 each carry phosphoserine. Disordered regions lie at residues 402 to 430 (EMDS…FLPV) and 579 to 603 (FGGS…SPSE).

This sequence belongs to the RIPOR family.

In Mus musculus (Mouse), this protein is RIPOR family member 3.